Consider the following 715-residue polypeptide: Palmitoyltransferase ZDHHC5 (715 aa).

The Cytoplasmic segment spans residues 1–13; that stretch reads MPAESGKRFKPSK. Residues 14-34 traverse the membrane as a helical segment; that stretch reads YVPVSAAAIFLVGATTLFFAF. The Extracellular portion of the chain corresponds to 35-38; it reads TCPG. A helical membrane pass occupies residues 39 to 59; it reads LSLYVSPAVPIYNAIMFLFVL. The Cytoplasmic portion of the chain corresponds to 60-148; the sequence is ANFSMATFMD…NCIGRRNYRY (89 aa). Y91 carries the phosphotyrosine modification. The DHHC domain maps to 104 to 154; it reads KWCATCRFYRPPRCSHCSVCDNCVEEFDHHCPWVNNCIGRRNYRYFFLFLL. Catalysis depends on C134, which acts as the S-palmitoyl cysteine intermediate. The helical transmembrane segment at 149–169 threads the bilayer; that stretch reads FFLFLLSLTAHIMGVFGFGLL. Topologically, residues 170–191 are extracellular; sequence YVLYHIEELSGVRTAVTMAVMC. The chain crosses the membrane as a helical span at residues 192 to 212; it reads VAGLFFIPVAGLTGFHVVLVA. The Cytoplasmic segment spans residues 213–715; sequence RGRTTNEQVT…VGGTTYEISV (503 aa). Position 247 is a phosphoserine (S247). Positions 289-715 are disordered; that stretch reads GELRRTKSKG…VGGTTYEISV (427 aa). T294 is modified (phosphothreonine). 2 positions are modified to phosphoserine: S296 and S299. T303 is modified (phosphothreonine). The residue at position 345 (S345) is a Phosphoserine. Phosphothreonine is present on residues T348 and T350. Over residues 359–373 the composition is skewed to low complexity; it reads SSSSTSAAMPHSSSA. Phosphoserine is present on residues S380, S398, S406, and S409. T411 is modified (phosphothreonine). Residues S415, S425, S429, and S432 each carry the phosphoserine modification. Residues 422-432 show a composition bias toward low complexity; that stretch reads SSGSRSSSLKS. Phosphothreonine is present on T436. The span at 442-478 shows a compositional bias: polar residues; that stretch reads QLQSIRSEGTTSTSYKSLANQTRNGSLSYDSLLTPSD. Residues S529 and S554 each carry the phosphoserine modification. The residue at position 617 (R617) is an Omega-N-methylarginine. The residue at position 621 (S621) is a Phosphoserine. A Phosphothreonine modification is found at T659. A compositionally biased stretch (polar residues) spans 666–677; sequence LKTTYSKSNGQP. Residues S684 and S694 each carry the phosphoserine modification. R697 is modified (omega-N-methylarginine).

This sequence belongs to the DHHC palmitoyltransferase family. ERF2/ZDHHC9 subfamily.

Its subcellular location is the cell membrane. The catalysed reaction is L-cysteinyl-[protein] + hexadecanoyl-CoA = S-hexadecanoyl-L-cysteinyl-[protein] + CoA. In terms of biological role, palmitoyltransferase that catalyzes the addition of palmitate onto various protein substrates such as CTNND2, CD36, GSDMD, NLRP3, NOD1, NOD2, STAT3 and S1PR1 thus plays a role in various biological processes including cell adhesion, inflammation, fatty acid uptake, bacterial sensing or cardiac functions. Plays an important role in the regulation of synapse efficacy by mediating palmitoylation of delta-catenin/CTNND2, thereby increasing synaptic delivery and surface stabilization of alpha-amino-3-hydroxy-5-methyl-4-isoxazole propionic acid receptors (AMPARs). Under basal conditions, remains at the synaptic membrane through FYN-mediated phosphorylation that prevents association with endocytic proteins. Neuronal activity enhances the internalization and trafficking of DHHC5 from spines to dendritic shafts where it palmitoylates delta-catenin/CTNND2. Regulates cell adhesion at the plasma membrane by palmitoylating GOLGA7B and DSG2. Plays a role in innate immune response by mediating the palmitoylation of NOD1 and NOD2 and their proper recruitment to the bacterial entry site and phagosomes. Also participates in fatty acid uptake by palmitoylating CD36 and thereby targeting it to the plasma membrane. Upon binding of fatty acids to CD36, gets phosphorylated by LYN leading to inactivation and subsequent CD36 caveolar endocytosis. Controls oligodendrocyte development by catalyzing STAT3 palmitoylation. Acts as a regulator of inflammatory response by mediating palmitoylation of NLRP3 and GSDMD. Palmitoylates NLRP3 to promote inflammasome assembly and activation. Activates pyroptosis by catalyzing palmitoylation of gasdermin-D (GSDMD), thereby promoting membrane translocation and pore formation of GSDMD. The protein is Palmitoyltransferase ZDHHC5 (ZDHHC5) of Pan troglodytes (Chimpanzee).